A 343-amino-acid chain; its full sequence is tRNA N6-adenosine threonylcarbamoyltransferase (343 aa).

Residues H120 and H124 each coordinate Fe cation. Substrate is bound by residues 142–146 (VVSGG), D175, G188, D192, and N281. D310 contributes to the Fe cation binding site.

This sequence belongs to the KAE1 / TsaD family. The cofactor is Fe(2+).

The protein resides in the cytoplasm. The enzyme catalyses L-threonylcarbamoyladenylate + adenosine(37) in tRNA = N(6)-L-threonylcarbamoyladenosine(37) in tRNA + AMP + H(+). Required for the formation of a threonylcarbamoyl group on adenosine at position 37 (t(6)A37) in tRNAs that read codons beginning with adenine. Is involved in the transfer of the threonylcarbamoyl moiety of threonylcarbamoyl-AMP (TC-AMP) to the N6 group of A37, together with TsaE and TsaB. TsaD likely plays a direct catalytic role in this reaction. The polypeptide is tRNA N6-adenosine threonylcarbamoyltransferase (Bacillus cereus (strain ATCC 14579 / DSM 31 / CCUG 7414 / JCM 2152 / NBRC 15305 / NCIMB 9373 / NCTC 2599 / NRRL B-3711)).